The primary structure comprises 500 residues: Amino-acid acetyltransferase, mitochondrial (500 aa).

The transit peptide at 1–19 directs the protein to the mitochondrion; it reads MQKPSLSQDLIWILKSVQS. The 161-residue stretch at 336–496 folds into the N-acetyltransferase domain; it reads FLGPKCLTDG…YMSVIDKIQP (161 aa).

It belongs to the acetyltransferase family.

The protein localises to the mitochondrion. The enzyme catalyses L-glutamate + acetyl-CoA = N-acetyl-L-glutamate + CoA + H(+). Its pathway is amino-acid biosynthesis; L-arginine biosynthesis; N(2)-acetyl-L-ornithine from L-glutamate: step 1/4. In terms of biological role, N-acetylglutamate synthase involved in arginine biosynthesis. This Schizosaccharomyces pombe (strain 972 / ATCC 24843) (Fission yeast) protein is Amino-acid acetyltransferase, mitochondrial (arg6).